Consider the following 516-residue polypeptide: MRLTVRLVDIAARGILLHHNDAKSLGVLAGDRIVISSPVTGKATVDYVETTGTLIDQGRIGVYHHTNEQLTLTENEVVEVRVADRPVSLDYIKKKMEGEKLTREDIRAIVADIVQDTLSPSEITAFVVSSYINQLDMDEIESLTRAMVETGDQLSFHAGPIVDKHSIGGVPGNKISLIVVPIIAASGLLIPKTSSRAITGAGGTADLMEVLAPVEFSASEVQEMTIKTGGVIVWGGATNIAPADDKIIIQEYPFKIDQIGQMIASVMAKKFAVGADVVAIDIPVGKYCKVHTIEEGKKLARQFIDLGERLNMRVECALTYGDAPVGRAIGPKLEIKEALSVLEGSDSPRSLIQKSCVIAGIALELAGKANRGEGANLALEILRSGKALKKFLDIIAVQGGTPDVSSEKITVGEHFYTVRADSTGYVIDLNNHSLITIARTAGAPADHGAGLYLHAKHGTSLSKGDPIFTIYADRKWRLEKAIEEARRLRPVMVEGMLIDRVPNVREWVPGRSRNLE.

AMP is bound by residues glycine 169, 195–200 (SRAITG), and threonine 204. The active-site Proton donor is aspartate 257. Positions 265 and 289 each coordinate AMP.

This sequence belongs to the thymidine/pyrimidine-nucleoside phosphorylase family. Type 2 subfamily.

The catalysed reaction is AMP + phosphate = alpha-D-ribose 1,5-bisphosphate + adenine. It carries out the reaction CMP + phosphate = cytosine + alpha-D-ribose 1,5-bisphosphate. The enzyme catalyses UMP + phosphate = alpha-D-ribose 1,5-bisphosphate + uracil. Its function is as follows. Catalyzes the conversion of AMP and phosphate to adenine and ribose 1,5-bisphosphate (R15P). Exhibits phosphorylase activity toward CMP and UMP in addition to AMP. Functions in an archaeal AMP degradation pathway, together with R15P isomerase and RubisCO. The protein is AMP phosphorylase of Methanospirillum hungatei JF-1 (strain ATCC 27890 / DSM 864 / NBRC 100397 / JF-1).